The sequence spans 397 residues: Elongation factor Tu (397 aa).

The tr-type G domain occupies 10-207; the sequence is KPHVNIGTLG…AVDNNIPDPV (198 aa). Residues 19-26 are G1; it reads GHVDHGKT. 19-26 is a GTP binding site; the sequence is GHVDHGKT. Residue T26 coordinates Mg(2+). A G2 region spans residues 63-67; it reads GITIN. Positions 84-87 are G3; it reads DAPG. Residues 84–88 and 139–142 contribute to the GTP site; these read DAPGH and NKSD. Residues 139 to 142 are G4; it reads NKSD. The interval 177-179 is G5; it reads SGL.

The protein belongs to the TRAFAC class translation factor GTPase superfamily. Classic translation factor GTPase family. EF-Tu/EF-1A subfamily. Monomer.

It is found in the cytoplasm. The enzyme catalyses GTP + H2O = GDP + phosphate + H(+). Its function is as follows. GTP hydrolase that promotes the GTP-dependent binding of aminoacyl-tRNA to the A-site of ribosomes during protein biosynthesis. This is Elongation factor Tu from Leifsonia xyli subsp. xyli (strain CTCB07).